The sequence spans 315 residues: Acetaldehyde dehydrogenase 1 (315 aa).

12-15 (SGNI) contributes to the NAD(+) binding site. Catalysis depends on C132, which acts as the Acyl-thioester intermediate. Residues 163 to 171 (SAGPGTRAN) and N291 contribute to the NAD(+) site.

This sequence belongs to the acetaldehyde dehydrogenase family.

It carries out the reaction acetaldehyde + NAD(+) + CoA = acetyl-CoA + NADH + H(+). This Paraburkholderia phymatum (strain DSM 17167 / CIP 108236 / LMG 21445 / STM815) (Burkholderia phymatum) protein is Acetaldehyde dehydrogenase 1.